Here is a 1401-residue protein sequence, read N- to C-terminus: Protein dispatched homolog 2 (1401 aa).

Disordered stretches follow at residues methionine 1–alanine 91 and aspartate 113–lysine 138. The chain crosses the membrane as a helical span at residues valine 170 to glycine 190. The N-linked (GlcNAc...) asparagine glycan is linked to asparagine 239. The disordered stretch occupies residues serine 241 to arginine 264. Residues asparagine 349 and asparagine 465 are each glycosylated (N-linked (GlcNAc...) asparagine). Residues glycine 471–leucine 643 enclose the SSD domain. Transmembrane regions (helical) follow at residues phenylalanine 484–alanine 504, leucine 510–leucine 530, phenylalanine 542–phenylalanine 562, phenylalanine 589–leucine 609, cysteine 617–leucine 637, tyrosine 704–serine 724, proline 964–tryptophan 984, leucine 990–leucine 1010, alanine 1019–serine 1039, alanine 1064–leucine 1084, and leucine 1088–glutamine 1108. Disordered stretches follow at residues alanine 1169–leucine 1192, proline 1229–arginine 1337, and serine 1352–serine 1401. Residues serine 1175–lysine 1184 are compositionally biased toward polar residues. The segment covering proline 1259–serine 1270 has biased composition (low complexity). The span at serine 1284 to proline 1305 shows a compositional bias: polar residues. Over residues serine 1352–serine 1362 the composition is skewed to low complexity. Arginine 1366 is subject to Omega-N-methylarginine.

This sequence belongs to the dispatched family.

It localises to the membrane. In Homo sapiens (Human), this protein is Protein dispatched homolog 2.